Consider the following 422-residue polypeptide: MLDMKFIRENLETVADMLKRRGTEAPLDEFKELDEKRREIIQEVEQLKHKRNVVSSKIGELKRAGEDASDIIAEMKEVSATIKKYDEELRGIEERLQQVVLSIPNMPHDSVPVGEDEDDNVEVRRWGEPRKFDFEFKPHWDLGEALDILDFERGSKVSGARFTFLKGAGARLERSLISFMIDHHTQNGYTEIFPPFMVNSDSCIGTGQLPKFAGDMFKVEGTDYYLIPTAEVPVTNLYRDEILNAEDLPVYHVAYSACFRAEAGAHGRDTRGIIRQHQFNKVELVKFVHPDKSFEELEKLTRNAEEILQMLELPYRVVTLCTGDLTFSSAKTYDIEVWMPAYDTYREISSCSNFKDFQARRAGIRFRPEPGAKAEYVHTLNGSGLAIGRTVAAIMENYQNEDGSITVPEVLRPYMGMDVIKP.

229 to 231 (TAE) contributes to the L-serine binding site. 260–262 (RAE) is an ATP binding site. Glutamate 283 contributes to the L-serine binding site. An ATP-binding site is contributed by 347–350 (EISS). Serine 383 contacts L-serine.

It belongs to the class-II aminoacyl-tRNA synthetase family. Type-1 seryl-tRNA synthetase subfamily. Homodimer. The tRNA molecule binds across the dimer.

It localises to the cytoplasm. It carries out the reaction tRNA(Ser) + L-serine + ATP = L-seryl-tRNA(Ser) + AMP + diphosphate + H(+). The enzyme catalyses tRNA(Sec) + L-serine + ATP = L-seryl-tRNA(Sec) + AMP + diphosphate + H(+). Its pathway is aminoacyl-tRNA biosynthesis; selenocysteinyl-tRNA(Sec) biosynthesis; L-seryl-tRNA(Sec) from L-serine and tRNA(Sec): step 1/1. In terms of biological role, catalyzes the attachment of serine to tRNA(Ser). Is also able to aminoacylate tRNA(Sec) with serine, to form the misacylated tRNA L-seryl-tRNA(Sec), which will be further converted into selenocysteinyl-tRNA(Sec). The protein is Serine--tRNA ligase of Halothermothrix orenii (strain H 168 / OCM 544 / DSM 9562).